The following is a 547-amino-acid chain: CTP synthase (547 aa).

Residues 1–265 are amidoligase domain; it reads MTRYVFITGG…DEIVLRKLHI (265 aa). Ser-13 lines the CTP pocket. Residue Ser-13 coordinates UTP. ATP-binding positions include 14 to 19 and Asp-71; that span reads SLGKGI. Mg(2+)-binding residues include Asp-71 and Glu-139. Residues 146–148, 186–191, and Lys-222 contribute to the CTP site; these read DIE and KTKPTQ. UTP is bound by residues 186–191 and Lys-222; that span reads KTKPTQ. One can recognise a Glutamine amidotransferase type-1 domain in the interval 290 to 541; the sequence is TVGMVGKYVD…IRAARAQHEK (252 aa). Gly-351 lines the L-glutamine pocket. Cys-378 functions as the Nucleophile; for glutamine hydrolysis in the catalytic mechanism. L-glutamine-binding positions include 379-382, Glu-402, and Arg-469; that span reads LGMQ. Residues His-514 and Glu-516 contribute to the active site.

This sequence belongs to the CTP synthase family. As to quaternary structure, homotetramer.

The enzyme catalyses UTP + L-glutamine + ATP + H2O = CTP + L-glutamate + ADP + phosphate + 2 H(+). The catalysed reaction is L-glutamine + H2O = L-glutamate + NH4(+). It catalyses the reaction UTP + NH4(+) + ATP = CTP + ADP + phosphate + 2 H(+). Its pathway is pyrimidine metabolism; CTP biosynthesis via de novo pathway; CTP from UDP: step 2/2. Its activity is regulated as follows. Allosterically activated by GTP, when glutamine is the substrate; GTP has no effect on the reaction when ammonia is the substrate. The allosteric effector GTP functions by stabilizing the protein conformation that binds the tetrahedral intermediate(s) formed during glutamine hydrolysis. Inhibited by the product CTP, via allosteric rather than competitive inhibition. Functionally, catalyzes the ATP-dependent amination of UTP to CTP with either L-glutamine or ammonia as the source of nitrogen. Regulates intracellular CTP levels through interactions with the four ribonucleotide triphosphates. The chain is CTP synthase from Thioalkalivibrio sulfidiphilus (strain HL-EbGR7).